The primary structure comprises 283 residues: GTP cyclohydrolase MptA (283 aa).

The protein belongs to the GTP cyclohydrolase IV family. Homodimer. Fe(2+) is required as a cofactor.

It catalyses the reaction GTP + H2O = 7,8-dihydroneopterin 2',3'-cyclic phosphate + formate + diphosphate + H(+). Its pathway is cofactor biosynthesis; 5,6,7,8-tetrahydromethanopterin biosynthesis. Functionally, converts GTP to 7,8-dihydro-D-neopterin 2',3'-cyclic phosphate, the first intermediate in the biosynthesis of coenzyme methanopterin. The protein is GTP cyclohydrolase MptA of Aeropyrum pernix (strain ATCC 700893 / DSM 11879 / JCM 9820 / NBRC 100138 / K1).